Reading from the N-terminus, the 208-residue chain is FMN-dependent NADH:quinone oxidoreductase 1 (208 aa).

17 to 19 lines the FMN pocket; it reads SVS.

Belongs to the azoreductase type 1 family. Homodimer. It depends on FMN as a cofactor.

It carries out the reaction 2 a quinone + NADH + H(+) = 2 a 1,4-benzosemiquinone + NAD(+). The catalysed reaction is N,N-dimethyl-1,4-phenylenediamine + anthranilate + 2 NAD(+) = 2-(4-dimethylaminophenyl)diazenylbenzoate + 2 NADH + 2 H(+). In terms of biological role, quinone reductase that provides resistance to thiol-specific stress caused by electrophilic quinones. Also exhibits azoreductase activity. Catalyzes the reductive cleavage of the azo bond in aromatic azo compounds to the corresponding amines. The chain is FMN-dependent NADH:quinone oxidoreductase 1 from Listeria monocytogenes serotype 4b (strain F2365).